The primary structure comprises 81 residues: Small serum protein 4 (81 aa).

The N-terminal stretch at Met-1–Gly-19 is a signal peptide. Intrachain disulfides connect Cys-21-Cys-74, Cys-41-Cys-66, and Cys-64-Cys-73.

It belongs to the beta-microseminoprotein family.

It is found in the secreted. In terms of biological role, shows an slight inhibitory effect toward the metalloproteinase brevilysin H6, but does not inhibit the metalloproteinases thermolysin, HR1A and HR1B. This is Small serum protein 4 from Protobothrops flavoviridis (Habu).